The chain runs to 165 residues: Minor capsid protein VP2 (165 aa).

This sequence belongs to the sapovirus VP2 family. In terms of assembly, homooligomer. The portal-like structure consists in 12 copies of VP2. Interacts with capsid protein VP1.

The protein localises to the virion. Its subcellular location is the host cytoplasm. Its function is as follows. Minor structural protein that forms a portal-like structure at a unique three-fold axis of symmetry, following binding to the host receptor. The channel formed by VP2 may allow the delivery of the viral genome through the host endosomal membrane. This Homo sapiens (Human) protein is Minor capsid protein VP2.